A 122-amino-acid chain; its full sequence is Large ribosomal subunit protein uL14c (122 aa).

It belongs to the universal ribosomal protein uL14 family. In terms of assembly, part of the 50S ribosomal subunit.

It is found in the plastid. The protein localises to the chloroplast. Binds to 23S rRNA. This chain is Large ribosomal subunit protein uL14c, found in Lactuca sativa (Garden lettuce).